The chain runs to 532 residues: CTP synthase (532 aa).

Positions 1-268 (MTTKYIFVTG…DEIVCDHLNL (268 aa)) are amidoligase domain. CTP is bound at residue serine 14. Position 14 (serine 14) interacts with UTP. An ATP-binding site is contributed by 15–20 (SLGKGI). Tyrosine 55 lines the L-glutamine pocket. Position 72 (aspartate 72) interacts with ATP. Mg(2+)-binding residues include aspartate 72 and glutamate 142. Residues 149–151 (DIE), 189–194 (KSKPTQ), and lysine 225 each bind CTP. Residues 189 to 194 (KSKPTQ) and lysine 225 each bind UTP. 241-243 (RDA) contributes to the ATP binding site. Residues 293–532 (KIALVGKYVA…REFIQASLRK (240 aa)) enclose the Glutamine amidotransferase type-1 domain. Glycine 355 serves as a coordination point for L-glutamine. The Nucleophile; for glutamine hydrolysis role is filled by cysteine 382. L-glutamine is bound by residues 383–386 (LGMQ), glutamate 406, and arginine 463. Catalysis depends on residues histidine 508 and glutamate 510.

It belongs to the CTP synthase family. As to quaternary structure, homotetramer.

The catalysed reaction is UTP + L-glutamine + ATP + H2O = CTP + L-glutamate + ADP + phosphate + 2 H(+). It catalyses the reaction L-glutamine + H2O = L-glutamate + NH4(+). The enzyme catalyses UTP + NH4(+) + ATP = CTP + ADP + phosphate + 2 H(+). Its pathway is pyrimidine metabolism; CTP biosynthesis via de novo pathway; CTP from UDP: step 2/2. Its activity is regulated as follows. Allosterically activated by GTP, when glutamine is the substrate; GTP has no effect on the reaction when ammonia is the substrate. The allosteric effector GTP functions by stabilizing the protein conformation that binds the tetrahedral intermediate(s) formed during glutamine hydrolysis. Inhibited by the product CTP, via allosteric rather than competitive inhibition. In terms of biological role, catalyzes the ATP-dependent amination of UTP to CTP with either L-glutamine or ammonia as the source of nitrogen. Regulates intracellular CTP levels through interactions with the four ribonucleotide triphosphates. The sequence is that of CTP synthase from Halalkalibacterium halodurans (strain ATCC BAA-125 / DSM 18197 / FERM 7344 / JCM 9153 / C-125) (Bacillus halodurans).